The chain runs to 311 residues: Ribonuclease Z (311 aa).

Residues His61, His63, Asp65, His66, His148, Asp216, and His275 each coordinate Zn(2+). Residue Asp65 is the Proton acceptor of the active site.

It belongs to the RNase Z family. In terms of assembly, homodimer. The cofactor is Zn(2+).

It catalyses the reaction Endonucleolytic cleavage of RNA, removing extra 3' nucleotides from tRNA precursor, generating 3' termini of tRNAs. A 3'-hydroxy group is left at the tRNA terminus and a 5'-phosphoryl group is left at the trailer molecule.. Functionally, zinc phosphodiesterase, which displays some tRNA 3'-processing endonuclease activity. Probably involved in tRNA maturation, by removing a 3'-trailer from precursor tRNA. This is Ribonuclease Z from Clostridium novyi (strain NT).